The sequence spans 201 residues: Recombination protein RecR (201 aa).

The C4-type zinc finger occupies 60 to 75; the sequence is CKVCGNIDTQNPCTVC. A Toprim domain is found at 83-178; the sequence is SIIVVVADVA…KVTRLAHGVP (96 aa).

This sequence belongs to the RecR family.

Functionally, may play a role in DNA repair. It seems to be involved in an RecBC-independent recombinational process of DNA repair. It may act with RecF and RecO. This chain is Recombination protein RecR, found in Rhodopseudomonas palustris (strain BisB18).